Reading from the N-terminus, the 239-residue chain is Phosphoribosylaminoimidazole-succinocarboxamide synthase (239 aa).

The protein belongs to the SAICAR synthetase family.

It catalyses the reaction 5-amino-1-(5-phospho-D-ribosyl)imidazole-4-carboxylate + L-aspartate + ATP = (2S)-2-[5-amino-1-(5-phospho-beta-D-ribosyl)imidazole-4-carboxamido]succinate + ADP + phosphate + 2 H(+). It functions in the pathway purine metabolism; IMP biosynthesis via de novo pathway; 5-amino-1-(5-phospho-D-ribosyl)imidazole-4-carboxamide from 5-amino-1-(5-phospho-D-ribosyl)imidazole-4-carboxylate: step 1/2. This is Phosphoribosylaminoimidazole-succinocarboxamide synthase from Dichelobacter nodosus (strain VCS1703A).